The primary structure comprises 452 residues: UDP-N-acetylmuramoyl-tripeptide--D-alanyl-D-alanine ligase (452 aa).

Position 113-119 (113-119) interacts with ATP; sequence GSNGKTT.

The protein belongs to the MurCDEF family. MurF subfamily.

It localises to the cytoplasm. It catalyses the reaction UDP-N-acetyl-alpha-D-muramoyl-L-alanyl-gamma-D-glutamyl-L-lysine + D-alanyl-D-alanine + ATP = UDP-N-acetyl-alpha-D-muramoyl-L-alanyl-gamma-D-glutamyl-L-lysyl-D-alanyl-D-alanine + ADP + phosphate + H(+). It functions in the pathway cell wall biogenesis; peptidoglycan biosynthesis. Its function is as follows. Involved in cell wall formation. Catalyzes the final step in the synthesis of UDP-N-acetylmuramoyl-pentapeptide, the precursor of murein. Catalyzes the addition of D-alanyl-D-alanine to UDP-MurNAc-L-alanyl-gamma-D-glutamyl-L-lysine. In vitro, can also use the mesodiaminopimelic acid-containing form of UDP-MurNAc-tripeptide, with the same efficiency, revealing that the discrimination for the amino acid residue at the third position of the peptide in the peptidoglycans is entirely supported by MurE. This Staphylococcus aureus (strain NCTC 8325 / PS 47) protein is UDP-N-acetylmuramoyl-tripeptide--D-alanyl-D-alanine ligase.